Reading from the N-terminus, the 327-residue chain is Putative HTH-type transcriptional regulatory protein MmarC6_0210 (327 aa).

Residues Leu128–Ile183 enclose the HTH cro/C1-type domain. The H-T-H motif DNA-binding region spans Val139–Gln158.

The polypeptide is Putative HTH-type transcriptional regulatory protein MmarC6_0210 (Methanococcus maripaludis (strain C6 / ATCC BAA-1332)).